The primary structure comprises 477 residues: Chaperonin GroEL 2 (477 aa).

ATP contacts are provided by residues 29–32 (TLGP), 86–90 (DGTTT), and G416.

The protein belongs to the chaperonin (HSP60) family. As to quaternary structure, forms a cylinder of 14 subunits composed of two heptameric rings stacked back-to-back. Interacts with the co-chaperonin GroES.

It localises to the cytoplasm. The enzyme catalyses ATP + H2O + a folded polypeptide = ADP + phosphate + an unfolded polypeptide.. Its function is as follows. Together with its co-chaperonin GroES, plays an essential role in assisting protein folding. The GroEL-GroES system forms a nano-cage that allows encapsulation of the non-native substrate proteins and provides a physical environment optimized to promote and accelerate protein folding. This chain is Chaperonin GroEL 2, found in Streptomyces lividans.